A 176-amino-acid chain; its full sequence is Probable inosine/xanthosine triphosphatase (176 aa).

Asp36 is a binding site for Mg(2+).

The protein belongs to the YjjX NTPase family. Homodimer. Requires Mg(2+) as cofactor. Mn(2+) serves as cofactor.

The enzyme catalyses XTP + H2O = XDP + phosphate + H(+). The catalysed reaction is ITP + H2O = IDP + phosphate + H(+). Functionally, phosphatase that hydrolyzes non-canonical purine nucleotides such as XTP and ITP to their respective diphosphate derivatives. Probably excludes non-canonical purines from DNA/RNA precursor pool, thus preventing their incorporation into DNA/RNA and avoiding chromosomal lesions. This is Probable inosine/xanthosine triphosphatase from Saccharolobus solfataricus (strain ATCC 35092 / DSM 1617 / JCM 11322 / P2) (Sulfolobus solfataricus).